A 185-amino-acid polypeptide reads, in one-letter code: HTH-type transcriptional regulator SACOL2593 (185 aa).

The region spanning Lys-6 to Phe-66 is the HTH tetR-type domain. Residues Ser-29–Phe-48 constitute a DNA-binding region (H-T-H motif).

The sequence is that of HTH-type transcriptional regulator SACOL2593 from Staphylococcus aureus (strain COL).